Reading from the N-terminus, the 80-residue chain is Large ribosomal subunit protein bL31B (80 aa).

Belongs to the bacterial ribosomal protein bL31 family. Type B subfamily. As to quaternary structure, part of the 50S ribosomal subunit.

In Xylella fastidiosa (strain M23), this protein is Large ribosomal subunit protein bL31B.